The primary structure comprises 142 residues: ATP synthase epsilon chain (142 aa).

It belongs to the ATPase epsilon chain family. F-type ATPases have 2 components, CF(1) - the catalytic core - and CF(0) - the membrane proton channel. CF(1) has five subunits: alpha(3), beta(3), gamma(1), delta(1), epsilon(1). CF(0) has three main subunits: a, b and c.

The protein resides in the cell inner membrane. Its function is as follows. Produces ATP from ADP in the presence of a proton gradient across the membrane. This Shewanella denitrificans (strain OS217 / ATCC BAA-1090 / DSM 15013) protein is ATP synthase epsilon chain.